Reading from the N-terminus, the 150-residue chain is D-aminoacyl-tRNA deacylase (150 aa).

The short motif at 133–134 is the Gly-cisPro motif, important for rejection of L-amino acids element; it reads GP.

This sequence belongs to the DTD family. As to quaternary structure, homodimer.

It localises to the cytoplasm. It carries out the reaction glycyl-tRNA(Ala) + H2O = tRNA(Ala) + glycine + H(+). The catalysed reaction is a D-aminoacyl-tRNA + H2O = a tRNA + a D-alpha-amino acid + H(+). An aminoacyl-tRNA editing enzyme that deacylates mischarged D-aminoacyl-tRNAs. Also deacylates mischarged glycyl-tRNA(Ala), protecting cells against glycine mischarging by AlaRS. Acts via tRNA-based rather than protein-based catalysis; rejects L-amino acids rather than detecting D-amino acids in the active site. By recycling D-aminoacyl-tRNA to D-amino acids and free tRNA molecules, this enzyme counteracts the toxicity associated with the formation of D-aminoacyl-tRNA entities in vivo and helps enforce protein L-homochirality. This is D-aminoacyl-tRNA deacylase from Kocuria rhizophila (strain ATCC 9341 / DSM 348 / NBRC 103217 / DC2201).